Consider the following 212-residue polypeptide: Mediator of RNA polymerase II transcription subunit 20 (212 aa).

This sequence belongs to the Mediator complex subunit 20 family. Component of the Mediator complex, which is composed of MED1, MED4, MED6, MED7, MED8, MED9, MED10, MED11, MED12, MED13, MED13L, MED14, MED15, MED16, MED17, MED18, MED19, MED20, MED21, MED22, MED23, MED24, MED25, MED26, MED27, MED29, MED30, MED31, CCNC, CDK8 and CDC2L6/CDK11. The MED12, MED13, CCNC and CDK8 subunits form a distinct module termed the CDK8 module. Mediator containing the CDK8 module is less active than Mediator lacking this module in supporting transcriptional activation. Individual preparations of the Mediator complex lacking one or more distinct subunits have been variously termed ARC, CRSP, DRIP, PC2, SMCC and TRAP. Interacts with PPARG.

The protein localises to the nucleus. Its function is as follows. Component of the Mediator complex, a coactivator involved in the regulated transcription of nearly all RNA polymerase II-dependent genes. Mediator functions as a bridge to convey information from gene-specific regulatory proteins to the basal RNA polymerase II transcription machinery. Mediator is recruited to promoters by direct interactions with regulatory proteins and serves as a scaffold for the assembly of a functional preinitiation complex with RNA polymerase II and the general transcription factors. The chain is Mediator of RNA polymerase II transcription subunit 20 (Med20) from Rattus norvegicus (Rat).